The sequence spans 144 residues: Protein MIX23 (144 aa).

Alanine 2 carries the post-translational modification N-acetylalanine. Positions 82–120 form a coiled coil; it reads VKSLREEREKNLDDLTLLKRLRKEQTKLKWMQSELNVEE. Position 100 is an N6-acetyllysine (lysine 100).

The protein belongs to the MIX23 family.

The sequence is that of Protein MIX23 from Mus musculus (Mouse).